The chain runs to 82 residues: Small ribosomal subunit protein bS16 (82 aa).

The protein belongs to the bacterial ribosomal protein bS16 family.

The protein is Small ribosomal subunit protein bS16 of Glaesserella parasuis serovar 5 (strain SH0165) (Haemophilus parasuis).